A 41-amino-acid chain; its full sequence is Peroxidase 3 (41 aa).

This sequence belongs to the peroxidase family. Classical plant (class III) peroxidase subfamily. The cofactor is heme b. It depends on Ca(2+) as a cofactor.

The protein resides in the secreted. The catalysed reaction is 2 a phenolic donor + H2O2 = 2 a phenolic radical donor + 2 H2O. Removal of H(2)O(2), oxidation of toxic reductants, biosynthesis and degradation of lignin, suberization, auxin catabolism, response to environmental stresses such as wounding, pathogen attack and oxidative stress. These functions might be dependent on each isozyme/isoform in each plant tissue. This is Peroxidase 3 from Vitis vinifera (Grape).